A 441-amino-acid chain; its full sequence is Enolase (441 aa).

Gln163 lines the (2R)-2-phosphoglycerate pocket. Glu205 acts as the Proton donor in catalysis. 3 residues coordinate Mg(2+): Asp242, Glu288, and Asp315. (2R)-2-phosphoglycerate-binding residues include Lys340, Arg369, Ser370, and Lys391. The active-site Proton acceptor is the Lys340.

It belongs to the enolase family. Mg(2+) serves as cofactor.

The protein localises to the cytoplasm. Its subcellular location is the secreted. It is found in the cell surface. The enzyme catalyses (2R)-2-phosphoglycerate = phosphoenolpyruvate + H2O. It participates in carbohydrate degradation; glycolysis; pyruvate from D-glyceraldehyde 3-phosphate: step 4/5. Functionally, catalyzes the reversible conversion of 2-phosphoglycerate (2-PG) into phosphoenolpyruvate (PEP). It is essential for the degradation of carbohydrates via glycolysis. The chain is Enolase from Ligilactobacillus salivarius (strain UCC118) (Lactobacillus salivarius).